A 365-amino-acid polypeptide reads, in one-letter code: Alanine racemase (365 aa).

Lys32 acts as the Proton acceptor; specific for D-alanine in catalysis. The residue at position 32 (Lys32) is an N6-(pyridoxal phosphate)lysine. Arg128 is a substrate binding site. Catalysis depends on Tyr257, which acts as the Proton acceptor; specific for L-alanine. Residue Met305 participates in substrate binding.

It belongs to the alanine racemase family. It depends on pyridoxal 5'-phosphate as a cofactor.

It carries out the reaction L-alanine = D-alanine. It participates in amino-acid biosynthesis; D-alanine biosynthesis; D-alanine from L-alanine: step 1/1. In terms of biological role, catalyzes the interconversion of L-alanine and D-alanine. May also act on other amino acids. This is Alanine racemase (alr) from Francisella philomiragia subsp. philomiragia (strain ATCC 25017 / CCUG 19701 / FSC 153 / O#319-036).